We begin with the raw amino-acid sequence, 547 residues long: Probable terpene synthase 3 (547 aa).

3 residues coordinate Mg(2+): aspartate 298, aspartate 302, and glutamate 451. A DDXXD motif motif is present at residues aspartate 298–aspartate 302.

The protein belongs to the terpene synthase family. The cofactor is Mg(2+).

Its function is as follows. Probable sesquiterpene synthase. This Ricinus communis (Castor bean) protein is Probable terpene synthase 3 (TPS3).